A 329-amino-acid polypeptide reads, in one-letter code: Beta-tectorin (329 aa).

An N-terminal signal peptide occupies residues 1–17 (MVTKAFVLLAIFAEASA). The ZP domain occupies 19–283 (SCAPNKADVI…LSCPVTCDKR (265 aa)). Residues asparagine 80, asparagine 104, asparagine 116, and asparagine 145 are each glycosylated (N-linked (GlcNAc...) asparagine). An intrachain disulfide couples cysteine 204 to cysteine 264. A lipid anchor (GPI-anchor amidated glycine) is attached at glycine 305. Positions 306-329 (FSSLYSFSDVLHHLIMMLGICAVL) are cleaved as a propeptide — removed in mature form.

In terms of assembly, may form homomeric filament after self-association or heteromeric filament after association with alpha-tectorin. Interacts with CEACAM16. The presence of a hydrophobic C-terminus preceded by a potential cleavage site strongly suggests that tectorins are synthesized as glycosylphosphatidylinositol-linked, membrane-bound precursors. Tectorins are targeted to the apical surface of the inner ear epithelia by the lipid and proteolytically released into the extracellular compartment.

The protein localises to the cell membrane. It localises to the secreted. Its subcellular location is the extracellular space. It is found in the extracellular matrix. One of the major non-collagenous components of the tectorial membrane. The tectorial membrane is an extracellular matrix of the inner ear that covers the neuroepithelium of the cochlea and contacts the stereocilia bundles of specialized sensory hair cells. Sound induces movement of these hair cells relative to the tectorial membrane, deflects the stereocilia and leads to fluctuations in hair-cell membrane potential, transducing sound into electrical signals. This Homo sapiens (Human) protein is Beta-tectorin (TECTB).